We begin with the raw amino-acid sequence, 357 residues long: UPF0324 membrane protein BMEI1914 (357 aa).

Helical transmembrane passes span 29–48 (NILP…MVLE), 58–77 (AWLE…RSLA), 90–112 (SAKL…SAVI), 117–136 (GLIF…SYGI), 149–171 (LVAC…VIGA), 181–203 (AFTA…LLGL), 210–232 (ILAG…VSLL), 242–261 (LVRV…ISGN), 268–290 (PGFF…LHSL), 300–322 (AIQY…GVDI), and 334–356 (LTAI…MLGV).

The protein belongs to the UPF0324 family.

The protein resides in the cell membrane. The sequence is that of UPF0324 membrane protein BMEI1914 from Brucella melitensis biotype 1 (strain ATCC 23456 / CCUG 17765 / NCTC 10094 / 16M).